The primary structure comprises 96 residues: UPF0235 protein PC1_3453 (96 aa).

The protein belongs to the UPF0235 family.

The polypeptide is UPF0235 protein PC1_3453 (Pectobacterium carotovorum subsp. carotovorum (strain PC1)).